The following is a 494-amino-acid chain: Ubiquitin carboxyl-terminal hydrolase 14 (494 aa).

A Ubiquitin-like domain is found at 4–80; that stretch reads YSVTVKWGKE…MMGSADALPE (77 aa). Residue Thr52 is modified to Phosphothreonine. The USP domain occupies 105 to 483; sequence CGLTNLGNTC…IAYVLLYGPR (379 aa). The active-site Nucleophile is the Cys114. Ser143 and Ser148 each carry phosphoserine. A Phosphothreonine modification is found at Thr235. Residues Ser237, Ser302, and Ser432 each carry the phosphoserine modification. The active-site Proton acceptor is His435. Lys449 is subject to N6-acetyllysine.

It belongs to the peptidase C19 family. USP14/UBP6 subfamily. Homodimer (Potential). Associates with the 26S proteasome. Interacts with FANCC, CXCR4 and ERN1. Interacts with TRIM14; this interaction recruits USP14 to cleave ubiquitin chains of CGAS.

Its subcellular location is the cytoplasm. The protein localises to the cell membrane. The enzyme catalyses Thiol-dependent hydrolysis of ester, thioester, amide, peptide and isopeptide bonds formed by the C-terminal Gly of ubiquitin (a 76-residue protein attached to proteins as an intracellular targeting signal).. Proteasome-associated deubiquitinase which releases ubiquitin from the proteasome targeted ubiquitinated proteins. Ensures the regeneration of ubiquitin at the proteasome. Is a reversibly associated subunit of the proteasome and a large fraction of proteasome-free protein exists within the cell. Required for the degradation of the chemokine receptor CXCR4 which is critical for CXCL12-induced cell chemotaxis. Also serves as a physiological inhibitor of endoplasmic reticulum-associated degradation (ERAD) under the non-stressed condition by inhibiting the degradation of unfolded endoplasmic reticulum proteins via interaction with ERN1. Indispensable for synaptic development and function at neuromuscular junctions (NMJs). Plays a role in the innate immune defense against viruses by stabilizing the viral DNA sensor CGAS and thus inhibiting its autophagic degradation. This is Ubiquitin carboxyl-terminal hydrolase 14 (USP14) from Bos taurus (Bovine).